A 221-amino-acid chain; its full sequence is MFIQLLILSYAILLQLIATQVADKQLPNLTKQCEPTSQTIYDFHVPTLDGSEKSLAEYRGKVLLLVNVATYCAYTFQYNDFNPMLENNSNGTLKILAFPCNQFLLQEPAENHELLNGLKYVRPGNGWEPHGNMHIFGKVEVNGDDHHPLYKFLKEHCPQTVPIIGDRHQLMYNPIGTNDIIWNFEKFLIDKKGHPRYRFHPSAWVQGSVIAPFIDELEREI.

A signal peptide spans 1–19; that stretch reads MFIQLLILSYAILLQLIAT. A glycan (N-linked (GlcNAc...) asparagine) is linked at Asn-28. Cys-72 is a catalytic residue. 2 N-linked (GlcNAc...) asparagine glycosylation sites follow: Asn-87 and Asn-90.

It belongs to the glutathione peroxidase family. As to quaternary structure, homotetramer.

It is found in the secreted. It localises to the extracellular space. It carries out the reaction 2 glutathione + H2O2 = glutathione disulfide + 2 H2O. The protein is Glutathione peroxidase of Dirofilaria immitis (Canine heartworm).